The chain runs to 290 residues: Ribosomal RNA small subunit methyltransferase H (290 aa).

Residues 35–37, D54, F81, D97, and Q104 contribute to the S-adenosyl-L-methionine site; that span reads GGH.

Belongs to the methyltransferase superfamily. RsmH family.

The protein resides in the cytoplasm. It carries out the reaction cytidine(1402) in 16S rRNA + S-adenosyl-L-methionine = N(4)-methylcytidine(1402) in 16S rRNA + S-adenosyl-L-homocysteine + H(+). Functionally, specifically methylates the N4 position of cytidine in position 1402 (C1402) of 16S rRNA. This Picosynechococcus sp. (strain ATCC 27264 / PCC 7002 / PR-6) (Agmenellum quadruplicatum) protein is Ribosomal RNA small subunit methyltransferase H.